The sequence spans 1268 residues: Truncated polyprotein 1aTF (1268 aa).

The segment at 8–28 (CMCTPAARVFWNAGQVFCTRC) adopts a C4-type; atypical zinc-finger fold. In terms of domain architecture, Peptidase C31 spans 69-180 (ECTPSGCCWL…QPFCPFEEAH (112 aa)). Residues 69 to 182 (ECTPSGCCWL…FCPFEEAHSD (114 aa)) form a PCP1-alpha region. Catalysis depends on for Nsp1-alpha papain-like cysteine proteinase activity residues Cys76 and His146. Positions 269–384 (PNVFDGKCWL…IFRFGAHKWY (116 aa)) are PCP1-beta. A Peptidase C32 domain is found at 269 to 385 (PNVFDGKCWL…FRFGAHKWYG (117 aa)). Active-site for Nsp1-beta papain-like cysteine proteinase activity residues include Cys276 and His345. The Peptidase C33 domain occupies 420–527 (TYSPPTDGSC…VGVCSEGCVA (108 aa)). Catalysis depends on for Nsp2 cysteine proteinase activity residues Cys429 and His498. Disordered regions lie at residues 728-758 (AIGS…SHPA) and 1027-1064 (SVTP…SHAS). Over residues 737-749 (DSKRENMHNSRED) the composition is skewed to basic and acidic residues. 4 helical membrane passes run 1119–1139 (LWLQ…CSVV), 1153–1173 (FLVL…LLLY), 1194–1214 (VMLS…AALW), and 1233–1253 (VISG…FLLF).

Its subcellular location is the host nucleus. It is found in the host cytoplasm. It localises to the host endoplasmic reticulum membrane. The protein resides in the membrane. Functionally, is essential for viral subgenomic mRNA synthesis. Its function is as follows. Inhibits IFN-beta production. Counteracts the action of NF-kappaB by decreasing the phosphorylation of IkappaB-alpha, such that the degradation of IkappaB-alpha is suppressed. This leads to the blockage of NF-kappaB nuclear translocation and thus interference of NF-kappaB activation. Also seems to inhibit IRF3-dependent pathways. Nsp1-beta transactivates the programmed ribosomal frameshifting event leading to the expression of the 1aTF polyprotein. The chain is Truncated polyprotein 1aTF from Porcine reproductive and respiratory syndrome virus (isolate Pig/United States/SD 01-08/2001) (PRRSV).